Reading from the N-terminus, the 486-residue chain is Probable peptidoglycan glycosyltransferase FtsW (486 aa).

At 1-50 the chain is on the cytoplasmic side; it reads MAGAARDRAFLDHFGGAGADRPCHVEGALMNDMSRQATRLDAIGGRYDPW. A helical membrane pass occupies residues 51–71; the sequence is LLGAAVTLASLGVVMVASSSI. Residues 72-77 lie on the Periplasmic side of the membrane; that stretch reads ELEASP. Residues 78-98 traverse the membrane as a helical segment; sequence FYYLTRHLLFLGGGIALAFWA. The Cytoplasmic segment spans residues 99–112; the sequence is MRTELKTIEQHNQM. A helical transmembrane segment spans residues 113–133; sequence LLLACFVLLVVVFVPGLGSTV. Topologically, residues 134 to 141 are periplasmic; that stretch reads NGAKRWIN. Residues 142–162 form a helical membrane-spanning segment; the sequence is LGVSRFQVVESVKVFYIIWLA. Over 163–174 the chain is Cytoplasmic; sequence SYLVRFRDEVNA. The chain crosses the membrane as a helical span at residues 175-195; sequence TWQAMLKPVFVVGLLVGLLLL. Residues 196–199 are Periplasmic-facing; it reads QPDF. The chain crosses the membrane as a helical span at residues 200–220; the sequence is GSSMLLLSVTACMLVLGGAPI. The Cytoplasmic segment spans residues 221 to 222; sequence GR. The chain crosses the membrane as a helical span at residues 223 to 243; it reads IILPILLLLPALVALVIFEPY. The Periplasmic portion of the chain corresponds to 244–298; that stretch reads RMRRVTSFMDPWVDQLGSGYQLSNALMAIGRGQWTGVGLGASVQKLNYLPESHTD. A helical transmembrane segment spans residues 299–319; the sequence is FIFSVIAEELGFVGVCGVIGL. Over 320 to 342 the chain is Cytoplasmic; sequence YALLVGRAFWLGMRCVEMKRHFS. A helical membrane pass occupies residues 343 to 363; it reads GYIAFGIGLWIAMQSFVSIGV. Topologically, residues 364 to 374 are periplasmic; it reads NLGILPTKGLT. The chain crosses the membrane as a helical span at residues 375–395; sequence LPLISSGGSSVLMTCLAMGVL. At 396-486 the chain is on the cytoplasmic side; it reads LRVSYEADRA…RVEPTFGRIA (91 aa).

The protein belongs to the SEDS family. FtsW subfamily.

Its subcellular location is the cell inner membrane. The catalysed reaction is [GlcNAc-(1-&gt;4)-Mur2Ac(oyl-L-Ala-gamma-D-Glu-L-Lys-D-Ala-D-Ala)](n)-di-trans,octa-cis-undecaprenyl diphosphate + beta-D-GlcNAc-(1-&gt;4)-Mur2Ac(oyl-L-Ala-gamma-D-Glu-L-Lys-D-Ala-D-Ala)-di-trans,octa-cis-undecaprenyl diphosphate = [GlcNAc-(1-&gt;4)-Mur2Ac(oyl-L-Ala-gamma-D-Glu-L-Lys-D-Ala-D-Ala)](n+1)-di-trans,octa-cis-undecaprenyl diphosphate + di-trans,octa-cis-undecaprenyl diphosphate + H(+). It participates in cell wall biogenesis; peptidoglycan biosynthesis. In terms of biological role, peptidoglycan polymerase that is essential for cell division. The chain is Probable peptidoglycan glycosyltransferase FtsW from Xanthomonas oryzae pv. oryzae (strain KACC10331 / KXO85).